A 1028-amino-acid chain; its full sequence is RNA cytidine acetyltransferase 2 (1028 aa).

ATP contacts are provided by residues 286–295 and Arg-458; that span reads GRGKSAALGL. The N-acetyltransferase domain maps to 546-729; it reads VLLGPVDESQ…FAPFYVSQIP (184 aa). Acetyl-CoA is bound by residues 617–619, 624–630, and Lys-717; these read IAV and MKMGYGS. The disordered stretch occupies residues 982-1028; it reads SGIISVKSTKSENENGFDKSTKKRSSDKRSSSSSKSKSSKKRKSLKE. Residues 990–1001 show a composition bias toward basic and acidic residues; the sequence is TKSENENGFDKS. Basic residues predominate over residues 1018–1028; that stretch reads KSSKKRKSLKE.

Belongs to the RNA cytidine acetyltransferase family. NAT10 subfamily.

The protein localises to the nucleus. It localises to the nucleolus. It catalyses the reaction a cytidine in 18S rRNA + acetyl-CoA + ATP + H2O = an N(4)-acetylcytidine in 18S rRNA + ADP + phosphate + CoA + H(+). The catalysed reaction is a cytidine in tRNA + acetyl-CoA + ATP + H2O = an N(4)-acetylcytidine in tRNA + ADP + phosphate + CoA + H(+). Its function is as follows. RNA cytidine acetyltransferase with specificity toward both 18S rRNA and tRNAs. Catalyzes the formation of N(4)-acetylcytidine (ac4C) in 18S rRNA. Required for early nucleolar cleavages of precursor rRNA at sites A0, A1 and A2 during 18S rRNA synthesis. Catalyzes the formation of ac4C in serine and leucine tRNAs. Requires a tRNA-binding adapter protein for full tRNA acetyltransferase activity but not for 18S rRNA acetylation. This Arabidopsis thaliana (Mouse-ear cress) protein is RNA cytidine acetyltransferase 2.